Reading from the N-terminus, the 1805-residue chain is Kinesin-like protein KIF13A (1805 aa).

In terms of domain architecture, Kinesin motor spans 5–352 (KVKVAVRVRP…LRYADRAKRI (348 aa)). Residue 102–109 (GQTGSGKS) participates in ATP binding. Positions 359–436 (NEDPNAKVIR…QLESMGISLE (78 aa)) form a coiled coil. One can recognise an FHA domain in the interval 469 to 519 (HTRVGADTSQDIQLFGIGIQPQHCEIDIASDGDVTLTPKENARSCVNGTLV). Over residues 556–567 (EKETGPPEHDLD) the composition is skewed to basic and acidic residues. 2 disordered regions span residues 556–575 (EKET…ASSE) and 633–656 (QQLS…SQTA). 2 coiled-coil regions span residues 602–775 (VQVL…LYGK) and 1100–1138 (DALI…EQWV). Residue S636 is modified to Phosphoserine. Residue S1287 is modified to Phosphoserine. Residues 1385–1396 (TPNVHNVSSSRP) are compositionally biased toward polar residues. Residues 1385–1404 (TPNVHNVSSSRPDLSGFDED) form a disordered region. S1454, I1481, S1490, and M1494 each carry phosphoserine. Residues 1507–1531 (PSGSNGSSMPVEHNSKREKKIDSEE) form a disordered region. Positions 1518 to 1547 (EHNSKREKKIDSEEEENELEAINRKLISSQ) form a coiled coil. Basic and acidic residues predominate over residues 1519–1528 (HNSKREKKID). 2 positions are modified to phosphoserine: S1529 and S1572. Positions 1612–1621 (MVVPSSDSSD) are enriched in low complexity. The tract at residues 1612-1645 (MVVPSSDSSDQLAIQTKDADSTEHSTPSLVHDFR) is disordered. Residues S1648 and S1698 each carry the phosphoserine modification. Positions 1749-1779 (GLTDSSAGELSSRRSLPNKTGGKTVSDGLHH) are disordered. Polar residues predominate over residues 1751–1771 (TDSSAGELSSRRSLPNKTGGK).

Belongs to the TRAFAC class myosin-kinesin ATPase superfamily. Kinesin family. As to quaternary structure, interacts with AP2B1. Interacts with ZFYVE26. Interacts with AP1G1 and AP1G2. As to expression, widely expressed, with highest levels in heart, brain and skeletal muscle.

It localises to the cytoplasm. Its subcellular location is the cytoskeleton. The protein localises to the microtubule organizing center. The protein resides in the centrosome. It is found in the midbody. It localises to the endosome membrane. Its subcellular location is the golgi apparatus membrane. Functionally, plus end-directed microtubule-dependent motor protein involved in intracellular transport and regulating various processes such as mannose-6-phosphate receptor (M6PR) transport to the plasma membrane, endosomal sorting during melanosome biogenesis and cytokinesis. Mediates the transport of M6PR-containing vesicles from trans-Golgi network to the plasma membrane via direct interaction with the AP-1 complex. During melanosome maturation, required for delivering melanogenic enzymes from recycling endosomes to nascent melanosomes by creating peripheral recycling endosomal subdomains in melanocytes. Also required for the abscission step in cytokinesis: mediates translocation of ZFYVE26, and possibly TTC19, to the midbody during cytokinesis. The sequence is that of Kinesin-like protein KIF13A (KIF13A) from Homo sapiens (Human).